Consider the following 262-residue polypeptide: MEELNKSGIYSKQFSLSQNKHNSERLQRLEKRLSGLHFSIELQKNEKIDKLNEKINSLEEKLIEMHENSNKTFEKLNEKLNDIRNDVTNYKNELEEFKNDHKKKLQLLEEKAEDFINKEKEDWSRLKIKLVKDFQHKAALLKEEMVEEYGLIEEKEDSLRKYYDCEINNIKSIIQNEISERIKTEKIILSDVDDKINEIMKIIRNEKTTRETYSENLVSLIEQYFSRIKKEIDMERLEREDTEETLVHLMEEALDKIGIPLA.

Positions 41–118 (ELQKNEKIDK…EEKAEDFINK (78 aa)) form a coiled coil.

This is an uncharacterized protein from Plasmodium falciparum (isolate 3D7).